The chain runs to 494 residues: Syntaphilin (494 aa).

Residues 1–75 (MAMSLPGSRR…GIKPPTPEQY (75 aa)) form a disordered region. Residues 7–49 (GSRRTSAGSRRRTSPPVSVRDAYGTSSLSSSSNSGSYKGSDSS) show a composition bias toward low complexity. Positions 79-161 (LQQKEVCIRH…VKNNLIDKDK (83 aa)) form a coiled coil. Disordered regions lie at residues 191-246 (MAKE…SGFA) and 338-398 (CGTD…GQSV). 2 positions are modified to phosphoserine: S200 and S204. The segment covering 207–217 (RSLTRSSTYTK) has biased composition (polar residues). T214 bears the Phosphothreonine mark. At S219 the chain carries Phosphoserine. Residues 230 to 246 (GDPSSGSAEDGADSGFA) are compositionally biased toward low complexity. Residues 344-353 (SGDRCPELDA) are compositionally biased toward basic and acidic residues. A helical membrane pass occupies residues 425 to 444 (YIVDLLAVVVPAVPTVAWLC).

As to quaternary structure, binds to STX1A. Interacts with DNM1; this interaction inhibits the binding of DNM1 to AMPH and DNM1-receptor-mediated endocytosis. Brain specific. Found in synapses.

It localises to the membrane. The protein localises to the synapse. Its subcellular location is the synaptosome. In terms of biological role, inhibits SNARE complex formation by absorbing free STX1A. The chain is Syntaphilin from Homo sapiens (Human).